We begin with the raw amino-acid sequence, 460 residues long: Putative arginine/ornithine antiporter (460 aa).

Residues 1-4 (MEKK) are Cytoplasmic-facing. Residues 5-25 (LGLSALTALVLSSMLGAGVFS) form a helical membrane-spanning segment. The Periplasmic portion of the chain corresponds to 26-38 (LPQNMAAVASPAA). The chain crosses the membrane as a helical span at residues 39–59 (LLIGWGITGAGILLLAFAMLI). Residues 60-92 (LTRIRPELDGGIFTYAREGFGELIGFCSAWGYW) are Cytoplasmic-facing. Residues 93–113 (LCAVIANVSYLVIVFSALSFF) form a helical membrane-spanning segment. Topologically, residues 114-125 (TDTPELRLFGDG) are periplasmic. Residues 126 to 146 (NTWQSIVGASALLWIVHFLIL) traverse the membrane as a helical segment. At 147–157 (RGVQTAASINL) the chain is on the cytoplasmic side. A helical transmembrane segment spans residues 158–178 (VATLAKLLPLGLFVVLAMMMF). The Periplasmic segment spans residues 179 to 201 (KLDTFKLDFTGLALGVPVWEQVK). Residues 202 to 222 (NTMLITLWVFIGVEGAVVVSA) form a helical membrane-spanning segment. Residues 223–235 (RARNKRDVGKATL) are Cytoplasmic-facing. The helical transmembrane segment at 236–256 (LAVLSALGVYLLVTLLSLGVV) threads the bilayer. At 257 to 282 (ARPELAEIRNPSMAGLMVEMMGPWGE) the chain is on the periplasmic side. A helical membrane pass occupies residues 283–303 (IIIAAGLIVSVCGAYLSWTIM). Residues 304 to 331 (AAEVPFLAATHKAFPRIFARQNAQAAPS) are Cytoplasmic-facing. A helical transmembrane segment spans residues 332-352 (ASLWLTNICVQICLVLIWLTG). The Periplasmic segment spans residues 353 to 357 (SDYNT). The chain crosses the membrane as a helical span at residues 358–378 (LLTIASEMILVPYFLVGAFLL). The Cytoplasmic segment spans residues 379-384 (KIATRP). The next 2 helical transmembrane spans lie at 385 to 405 (LHKAVGVGACIYGLWLLYASG) and 406 to 426 (PMHLLLSVVLYAPGLLVFLYA). At 427–439 (RKTHTHDNVLNRQ) the chain is on the cytoplasmic side. A helical membrane pass occupies residues 440 to 460 (EMVLIGMLLIASVPATWMLVG).

The protein belongs to the amino acid-polyamine-organocation (APC) superfamily. Basic amino acid/polyamine antiporter (APA) (TC 2.A.3.2) family.

It is found in the cell inner membrane. The catalysed reaction is L-ornithine(in) + L-arginine(out) = L-ornithine(out) + L-arginine(in). Functionally, catalyzes electroneutral exchange between arginine and ornithine to allow high-efficiency energy conversion in the arginine deiminase pathway. This Escherichia coli O6:H1 (strain CFT073 / ATCC 700928 / UPEC) protein is Putative arginine/ornithine antiporter (ydgI).